A 261-amino-acid chain; its full sequence is Putative cytochrome YdhU (261 aa).

Residues Phe25–Gly45 traverse the membrane as a helical segment. His77 provides a ligand contact to heme b. 3 helical membrane-spanning segments follow: residues Ala81 to Ala101, Val108 to Ile128, and Val182 to Cys202. His111 contributes to the heme b binding site. Residues His223 and His237 each contribute to the heme b site. A helical membrane pass occupies residues Phe224–Gly244. His237 contributes to the a menaquinone binding site.

This sequence belongs to the PhsC family. Heme serves as cofactor.

It localises to the cell inner membrane. This is Putative cytochrome YdhU (ydhU) from Escherichia coli (strain K12).